A 436-amino-acid polypeptide reads, in one-letter code: UDP-N-acetylmuramate--L-alanine ligase (436 aa).

An ATP-binding site is contributed by 111–117; sequence GTHGKTS.

It belongs to the MurCDEF family.

Its subcellular location is the cytoplasm. It carries out the reaction UDP-N-acetyl-alpha-D-muramate + L-alanine + ATP = UDP-N-acetyl-alpha-D-muramoyl-L-alanine + ADP + phosphate + H(+). Its pathway is cell wall biogenesis; peptidoglycan biosynthesis. Its function is as follows. Cell wall formation. The protein is UDP-N-acetylmuramate--L-alanine ligase of Lactiplantibacillus plantarum (strain ATCC BAA-793 / NCIMB 8826 / WCFS1) (Lactobacillus plantarum).